The following is a 591-amino-acid chain: L-fucose isomerase (591 aa).

Active-site proton acceptor residues include Glu-338 and Asp-362. Residues Glu-338, Asp-362, and His-529 each contribute to the Mn(2+) site.

The protein belongs to the L-fucose isomerase family. Requires Mn(2+) as cofactor.

The protein localises to the cytoplasm. The catalysed reaction is L-fucose = L-fuculose. The protein operates within carbohydrate degradation; L-fucose degradation; L-lactaldehyde and glycerone phosphate from L-fucose: step 1/3. Functionally, converts the aldose L-fucose into the corresponding ketose L-fuculose. The chain is L-fucose isomerase from Bacteroides thetaiotaomicron (strain ATCC 29148 / DSM 2079 / JCM 5827 / CCUG 10774 / NCTC 10582 / VPI-5482 / E50).